The chain runs to 234 residues: Endonuclease V (234 aa).

Residues Asp36 and Asp104 each coordinate Mg(2+).

The protein belongs to the endonuclease V family. Mg(2+) is required as a cofactor.

The protein resides in the cytoplasm. The catalysed reaction is Endonucleolytic cleavage at apurinic or apyrimidinic sites to products with a 5'-phosphate.. Functionally, DNA repair enzyme involved in the repair of deaminated bases. Selectively cleaves double-stranded DNA at the second phosphodiester bond 3' to a deoxyinosine leaving behind the intact lesion on the nicked DNA. This Yersinia pestis protein is Endonuclease V.